Consider the following 299-residue polypeptide: MQLGVIGLGRMGRIVVDRVLDAGHEVVAFDLSAEAVAAAADAGAEPADSVADLVDRLGDDKRIWLMVPAGDAVDATLDDLDPHLDGDDVVVDGGNSHFEESVRRAEACSAAYLDCGTSGGPAGAELGFSLMVGGPQWAYDELTPVFDAVATGPDGHGHMGDSGSGHYVKMVHNGVEYALMQAYGEGFELLAEGRYDLDLESVAKTWNNGAVIRSWLLELCEEAFREEGSDLGDVDDHVAGGSTGTWTVQEALEQEVPVPLIYQSLAERFGSRADDRFSRRLANRLRYGFGRHEVARKDD.

Residues glycine 7–glycine 12, valine 67–alanine 69, and asparagine 95 contribute to the NAD(+) site. Substrate contacts are provided by asparagine 95, serine 118, and glycine 120. Lysine 169 serves as the catalytic Proton acceptor. Histidine 172–asparagine 173 is a binding site for substrate. The active-site Proton donor is the glutamate 176. 2 residues coordinate substrate: tyrosine 177 and arginine 268.

This sequence belongs to the 6-phosphogluconate dehydrogenase family. In terms of assembly, homotetramer.

It carries out the reaction 6-phospho-D-gluconate + NAD(+) = D-ribulose 5-phosphate + CO2 + NADH. Its pathway is carbohydrate degradation; pentose phosphate pathway. In terms of biological role, catalyzes the oxidative decarboxylation of 6-phosphogluconate to ribulose 5-phosphate and CO(2), with concomitant reduction of NAD to NADH. This is 6-phosphogluconate dehydrogenase, NAD(+)-dependent, decarboxylating from Haloferax volcanii (strain ATCC 29605 / DSM 3757 / JCM 8879 / NBRC 14742 / NCIMB 2012 / VKM B-1768 / DS2) (Halobacterium volcanii).